The following is a 248-amino-acid chain: Protein GrpE (248 aa).

The disordered stretch occupies residues 229-248 (AAPKEDTLPAQENQSSPADS). Residues 238–248 (AQENQSSPADS) are compositionally biased toward polar residues.

Belongs to the GrpE family. Homodimer.

The protein localises to the cytoplasm. Its function is as follows. Participates actively in the response to hyperosmotic and heat shock by preventing the aggregation of stress-denatured proteins, in association with DnaK and GrpE. It is the nucleotide exchange factor for DnaK and may function as a thermosensor. Unfolded proteins bind initially to DnaJ; upon interaction with the DnaJ-bound protein, DnaK hydrolyzes its bound ATP, resulting in the formation of a stable complex. GrpE releases ADP from DnaK; ATP binding to DnaK triggers the release of the substrate protein, thus completing the reaction cycle. Several rounds of ATP-dependent interactions between DnaJ, DnaK and GrpE are required for fully efficient folding. The chain is Protein GrpE from Nostoc sp. (strain PCC 7120 / SAG 25.82 / UTEX 2576).